Reading from the N-terminus, the 539-residue chain is Acid-sensing ion channel 4 (539 aa).

Topologically, residues 1–68 are cytoplasmic; the sequence is MPIEIVCKIK…GPGPHGLRRT (68 aa). The helical transmembrane segment at 69-89 threads the bilayer; sequence LWALALLTSLAAFLYQAAGLA. At 90–438 the chain is on the extracellular side; that stretch reads RGYLTRPHLV…EQRAAYGLSA (349 aa). 2 cysteine pairs are disulfide-bonded: cysteine 118–cysteine 202 and cysteine 180–cysteine 187. Residues asparagine 191 and asparagine 243 are each glycosylated (N-linked (GlcNAc...) asparagine). Disulfide bonds link cysteine 296/cysteine 375, cysteine 318/cysteine 371, cysteine 322/cysteine 369, cysteine 331/cysteine 353, and cysteine 333/cysteine 345. An N-linked (GlcNAc...) asparagine glycan is attached at asparagine 376. A helical membrane pass occupies residues 439 to 459; it reads LLGDLGGQMGLFIGASILTLL. The GAS motif; ion selectivity filter motif lies at 452–454; sequence GAS. The Cytoplasmic portion of the chain corresponds to 460–539; the sequence is EILDYIYEVS…PGGLFEDFAC (80 aa). Residues 501 to 531 form a disordered region; that stretch reads EQSPCPSRGRVEGGGVSSLLPNHHHPHGPPG.

This sequence belongs to the amiloride-sensitive sodium channel (TC 1.A.6) family. ASIC4 subfamily. Homotrimer. Heterotrimer; with other ASIC proteins producing functional channels. In terms of tissue distribution, expressed in pituitary gland. Weakly expressed in brain, vestibular system and organ of Corti.

Its subcellular location is the cell membrane. Does not exhibit measurable stand-alone pH-gated sodium channel activity but may form pH-gated heterotrimeric sodium channels. Its activity could also depend on alternative gating mechanisms. This chain is Acid-sensing ion channel 4, found in Homo sapiens (Human).